The primary structure comprises 252 residues: 2-C-methyl-D-erythritol 4-phosphate cytidylyltransferase (252 aa).

It belongs to the IspD/TarI cytidylyltransferase family. IspD subfamily.

It carries out the reaction 2-C-methyl-D-erythritol 4-phosphate + CTP + H(+) = 4-CDP-2-C-methyl-D-erythritol + diphosphate. It participates in isoprenoid biosynthesis; isopentenyl diphosphate biosynthesis via DXP pathway; isopentenyl diphosphate from 1-deoxy-D-xylulose 5-phosphate: step 2/6. Catalyzes the formation of 4-diphosphocytidyl-2-C-methyl-D-erythritol from CTP and 2-C-methyl-D-erythritol 4-phosphate (MEP). This chain is 2-C-methyl-D-erythritol 4-phosphate cytidylyltransferase, found in Chlorobium phaeobacteroides (strain BS1).